A 127-amino-acid chain; its full sequence is Apolipoprotein C-IV (127 aa).

An N-terminal signal peptide occupies residues 1-27 (MSLLRNRLQDLPALCLCVLVLACIGAC).

This sequence belongs to the apolipoprotein C4 family.

Its subcellular location is the secreted. Its function is as follows. May participate in lipoprotein metabolism. This chain is Apolipoprotein C-IV (APOC4), found in Papio hamadryas (Hamadryas baboon).